An 89-amino-acid polypeptide reads, in one-letter code: Small ribosomal subunit protein bS20 (89 aa).

The protein belongs to the bacterial ribosomal protein bS20 family.

In terms of biological role, binds directly to 16S ribosomal RNA. The sequence is that of Small ribosomal subunit protein bS20 from Helicobacter pylori (strain ATCC 700392 / 26695) (Campylobacter pylori).